The primary structure comprises 839 residues: LPS-assembly protein LptD (839 aa).

An N-terminal signal peptide occupies residues 1–21; the sequence is MAIGITACVLSLINYQGLAYS.

The protein belongs to the LptD family. As to quaternary structure, component of the lipopolysaccharide transport and assembly complex. Interacts with LptE and LptA.

The protein resides in the cell outer membrane. Together with LptE, is involved in the assembly of lipopolysaccharide (LPS) at the surface of the outer membrane. The polypeptide is LPS-assembly protein LptD (Legionella pneumophila subsp. pneumophila (strain Philadelphia 1 / ATCC 33152 / DSM 7513)).